A 1378-amino-acid polypeptide reads, in one-letter code: DNA-directed RNA polymerase subunit beta' (1378 aa).

Zn(2+) is bound by residues Cys-69, Cys-71, Cys-84, and Cys-87. Mg(2+)-binding residues include Asp-460, Asp-462, and Asp-464. Residues Cys-808, Cys-882, Cys-889, and Cys-892 each coordinate Zn(2+).

It belongs to the RNA polymerase beta' chain family. As to quaternary structure, the RNAP catalytic core consists of 2 alpha, 1 beta, 1 beta' and 1 omega subunit. When a sigma factor is associated with the core the holoenzyme is formed, which can initiate transcription. The cofactor is Mg(2+). Zn(2+) is required as a cofactor.

The catalysed reaction is RNA(n) + a ribonucleoside 5'-triphosphate = RNA(n+1) + diphosphate. DNA-dependent RNA polymerase catalyzes the transcription of DNA into RNA using the four ribonucleoside triphosphates as substrates. In Rickettsia canadensis (strain McKiel), this protein is DNA-directed RNA polymerase subunit beta'.